The primary structure comprises 194 residues: FAD-linked sulfhydryl oxidase ERV1 (194 aa).

Residues 44–72 (LSLSLSPPPTPPSPPPPPPEVLKKDSKAA) are disordered. Residues 49–63 (SPPPTPPSPPPPPPE) are compositionally biased toward pro residues. Residues 72–172 (APLTKEEVGR…FPCQRVNARW (101 aa)) form the ERV/ALR sulfhydryl oxidase domain. FAD is bound by residues Lys-76, Arg-81, Trp-84, Glu-121, His-125, Cys-148, His-151, Asn-152, Asn-155, Lys-160, and Arg-171. Cys-119 and Cys-122 are oxidised to a cystine. Cys-148 and Cys-165 are oxidised to a cystine. An intrachain disulfide couples Cys-177 to Cys-182. The short motif at 177–182 (CPERSC) is the Required for dimerization and substrate specificity element.

In terms of assembly, homodimer. Requires FAD as cofactor. Post-translationally, contains three disulfide bonds; one catalytic disulfide (Cys-119 to Cys-122), one structural disulfide (Cys-148 to Cys-165), and one shuttle disulfide (Cys-177 to Cys-182).

The protein localises to the mitochondrion. It catalyses the reaction 2 R'C(R)SH + O2 = R'C(R)S-S(R)CR' + H2O2. Its function is as follows. FAD-dependent sulfhydryl oxidase that catalyzes disulfide bond formation. Oxidizes thioredoxin in vitro. Required for the import and folding of small cysteine-containing proteins in the mitochondrial intermembrane space, and can act independently of the oxidoreductase MIA40. Can oxidize the cytochrome c oxidase assembly protein COX19, a typical substrate of MIA40. This is FAD-linked sulfhydryl oxidase ERV1 from Oryza sativa subsp. japonica (Rice).